Reading from the N-terminus, the 89-residue chain is MALTQERKREIIEQFKVHENDTGSPEVQIAILTEQINNLNEHLRVHKKDHHSRRGLLKMVGKRRNLLAYLRNKDVARYRELIEKLGLRR.

Belongs to the universal ribosomal protein uS15 family. In terms of assembly, part of the 30S ribosomal subunit. Forms a bridge to the 50S subunit in the 70S ribosome, contacting the 23S rRNA.

Functionally, one of the primary rRNA binding proteins, it binds directly to 16S rRNA where it helps nucleate assembly of the platform of the 30S subunit by binding and bridging several RNA helices of the 16S rRNA. In terms of biological role, forms an intersubunit bridge (bridge B4) with the 23S rRNA of the 50S subunit in the ribosome. The chain is Small ribosomal subunit protein uS15 from Geobacillus thermodenitrificans (strain NG80-2).